The following is a 334-amino-acid chain: Methionine import ATP-binding protein MetN (334 aa).

The ABC transporter domain occupies 7 to 246 (VEFRSVSKVF…PRSAPARAFV (240 aa)). Position 43–50 (43–50 (GYSGAGKS)) interacts with ATP.

Belongs to the ABC transporter superfamily. Methionine importer (TC 3.A.1.24) family. In terms of assembly, the complex is composed of two ATP-binding proteins (MetN), two transmembrane proteins (MetI) and a solute-binding protein (MetQ).

It is found in the cell membrane. The enzyme catalyses L-methionine(out) + ATP + H2O = L-methionine(in) + ADP + phosphate + H(+). It catalyses the reaction D-methionine(out) + ATP + H2O = D-methionine(in) + ADP + phosphate + H(+). Part of the ABC transporter complex MetNIQ involved in methionine import. Responsible for energy coupling to the transport system. The chain is Methionine import ATP-binding protein MetN from Nocardia farcinica (strain IFM 10152).